The primary structure comprises 169 residues: MIEIEKVREIVERVARDYGLEVVEVEFRGGGKARMLRITIDKPEGVTHDDCSHVSNEVSTILDVEDVVPGASYTLEVSSPGLDRKISKPADFERFTGSLVKVSTREPLDGNRHFEGRLESFADGKLTIDLNAVPQRGQKKQKGPKAPVVERKVEIALADVEKANLVPEI.

It belongs to the RimP family.

Its subcellular location is the cytoplasm. Its function is as follows. Required for maturation of 30S ribosomal subunits. In Koribacter versatilis (strain Ellin345), this protein is Ribosome maturation factor RimP.